Reading from the N-terminus, the 297-residue chain is Bifunctional protein FolD (297 aa).

Residues 164–166 (GRS), S193, and I234 each bind NADP(+).

The protein belongs to the tetrahydrofolate dehydrogenase/cyclohydrolase family. In terms of assembly, homodimer.

The catalysed reaction is (6R)-5,10-methylene-5,6,7,8-tetrahydrofolate + NADP(+) = (6R)-5,10-methenyltetrahydrofolate + NADPH. The enzyme catalyses (6R)-5,10-methenyltetrahydrofolate + H2O = (6R)-10-formyltetrahydrofolate + H(+). Its pathway is one-carbon metabolism; tetrahydrofolate interconversion. In terms of biological role, catalyzes the oxidation of 5,10-methylenetetrahydrofolate to 5,10-methenyltetrahydrofolate and then the hydrolysis of 5,10-methenyltetrahydrofolate to 10-formyltetrahydrofolate. This Halobacterium salinarum (strain ATCC 700922 / JCM 11081 / NRC-1) (Halobacterium halobium) protein is Bifunctional protein FolD.